Reading from the N-terminus, the 388-residue chain is Succinate--CoA ligase [ADP-forming] subunit beta (388 aa).

An ATP-grasp domain is found at 9 to 244; that stretch reads KQIFAEYQLP…PSQEDPREAL (236 aa). Residues K46, 53 to 55, E99, S102, and E107 contribute to the ATP site; that span reads GRG. The Mg(2+) site is built by N199 and D213. Residues N264 and 321–323 contribute to the substrate site; that span reads GIV.

Belongs to the succinate/malate CoA ligase beta subunit family. As to quaternary structure, heterotetramer of two alpha and two beta subunits. The cofactor is Mg(2+).

It catalyses the reaction succinate + ATP + CoA = succinyl-CoA + ADP + phosphate. It carries out the reaction GTP + succinate + CoA = succinyl-CoA + GDP + phosphate. The protein operates within carbohydrate metabolism; tricarboxylic acid cycle; succinate from succinyl-CoA (ligase route): step 1/1. Its function is as follows. Succinyl-CoA synthetase functions in the citric acid cycle (TCA), coupling the hydrolysis of succinyl-CoA to the synthesis of either ATP or GTP and thus represents the only step of substrate-level phosphorylation in the TCA. The beta subunit provides nucleotide specificity of the enzyme and binds the substrate succinate, while the binding sites for coenzyme A and phosphate are found in the alpha subunit. In Pasteurella multocida (strain Pm70), this protein is Succinate--CoA ligase [ADP-forming] subunit beta.